The following is a 412-amino-acid chain: Alanyl-tRNA editing protein Aarsd1-A (412 aa).

Zn(2+) is bound by residues H108, H112, C208, and H212.

The protein belongs to the class-II aminoacyl-tRNA synthetase family. Alax-L subfamily. Requires Zn(2+) as cofactor.

The protein resides in the cytoplasm. Functionally, functions in trans to edit the amino acid moiety from incorrectly charged tRNA(Ala). The polypeptide is Alanyl-tRNA editing protein Aarsd1-A (aarsd1-a) (Xenopus laevis (African clawed frog)).